Consider the following 208-residue polypeptide: FMN-dependent NADH:quinone oxidoreductase (208 aa).

FMN is bound by residues S9, 15–17, 96–99, and 140–143; these read SAS, MYNF, and TRGG.

The protein belongs to the azoreductase type 1 family. As to quaternary structure, homodimer. It depends on FMN as a cofactor.

The catalysed reaction is 2 a quinone + NADH + H(+) = 2 a 1,4-benzosemiquinone + NAD(+). It carries out the reaction N,N-dimethyl-1,4-phenylenediamine + anthranilate + 2 NAD(+) = 2-(4-dimethylaminophenyl)diazenylbenzoate + 2 NADH + 2 H(+). Functionally, quinone reductase that provides resistance to thiol-specific stress caused by electrophilic quinones. Its function is as follows. Also exhibits azoreductase activity. Catalyzes the reductive cleavage of the azo bond in aromatic azo compounds to the corresponding amines. This chain is FMN-dependent NADH:quinone oxidoreductase, found in Ralstonia nicotianae (strain ATCC BAA-1114 / GMI1000) (Ralstonia solanacearum).